Reading from the N-terminus, the 185-residue chain is DNA-directed RNA polymerase 22 kDa subunit (185 aa).

The protein belongs to the poxviridae DNA-directed RNA polymerase 22 kDa subunit family. In terms of assembly, the DNA-dependent RNA polymerase used for intermediate and late genes expression consists of eight subunits Rpo30/OPG66, Rpo7/OPG90, Rpo22/OPG103, Rpo147/OPG105, Rpo18/OPG119, Rpo19/OPG131, Rpo132/OPG151 and Rpo35/OPG156. The same holoenzyme, with the addition of the transcription-specificity factor OPG109, is used for early gene expression.

Its subcellular location is the virion. The enzyme catalyses RNA(n) + a ribonucleoside 5'-triphosphate = RNA(n+1) + diphosphate. Functionally, part of the DNA-dependent RNA polymerase which catalyzes the transcription of viral DNA into RNA using the four ribonucleoside triphosphates as substrates. Responsible for the transcription of early, intermediate and late genes. DNA-dependent RNA polymerase associates with the early transcription factor (ETF), itself composed of OPG118 and OPG133, thereby allowing the early genes transcription. Late transcription, and probably also intermediate transcription, require newly synthesized RNA polymerase. The polypeptide is DNA-directed RNA polymerase 22 kDa subunit (OPG103) (Cynomys gunnisoni (Gunnison's prairie dog)).